Consider the following 287-residue polypeptide: MKFAIVANTERKEAVLLAKELTGWLDSKRVSYVLESLSAEKLGIGPSAKIDDLNRICDIFISLGGDGTLLLASHYSETKPVLGINVGHLGFLTEFNKDEMIGAVEKVLDGSYSIHNRTQLEATTMCNGREQRMCALNDVVIEKGTYPRIPTFVIRLDGELLGSYRADGIIIATSTGSTAYSMSAGGPIIAPKSSVFVITPICPHMLTVRPIVISDDKVIEVSVDAQAGEFPLNCDGRITRMLQPQETVTVKKSNDLINLVANEERDYCEILRTKLLWGREHASSQPE.

Catalysis depends on Asp-66, which acts as the Proton acceptor. Residues 66-67 (DG), 137-138 (ND), Arg-148, Arg-165, Asp-167, and 178-183 (TAYSMS) each bind NAD(+).

It belongs to the NAD kinase family. It depends on a divalent metal cation as a cofactor.

It is found in the cytoplasm. It catalyses the reaction NAD(+) + ATP = ADP + NADP(+) + H(+). Functionally, involved in the regulation of the intracellular balance of NAD and NADP, and is a key enzyme in the biosynthesis of NADP. Catalyzes specifically the phosphorylation on 2'-hydroxyl of the adenosine moiety of NAD to yield NADP. The polypeptide is NAD kinase (Chlorobium limicola (strain DSM 245 / NBRC 103803 / 6330)).